A 625-amino-acid polypeptide reads, in one-letter code: tRNA uridine 5-carboxymethylaminomethyl modification enzyme MnmG (625 aa).

14–19 (GAGHAG) contacts FAD. Position 273–287 (273–287 (GPRYCPSIEDKIVRF)) interacts with NAD(+).

This sequence belongs to the MnmG family. Homodimer. Heterotetramer of two MnmE and two MnmG subunits. Requires FAD as cofactor.

It localises to the cytoplasm. In terms of biological role, NAD-binding protein involved in the addition of a carboxymethylaminomethyl (cmnm) group at the wobble position (U34) of certain tRNAs, forming tRNA-cmnm(5)s(2)U34. In Clostridium botulinum (strain Hall / ATCC 3502 / NCTC 13319 / Type A), this protein is tRNA uridine 5-carboxymethylaminomethyl modification enzyme MnmG.